The sequence spans 584 residues: Chondroitin proteoglycan 1 (584 aa).

The N-terminal stretch at 1-17 is a signal peptide; it reads MTLKPVLLAFLVASAYA. The O-linked (Xyl...) (chondroitin sulfate) serine glycan is linked to Ser-50. 3 consecutive Chitin-binding type-2 domains span residues 58–115, 211–268, and 524–578; these read DTDC…QCGG, TKSC…ECTN, and VPAC…ECHQ. Intrachain disulfides connect Cys-91-Cys-104 and Cys-244-Cys-257. A disordered region spans residues 267–295; it reads TNGSGNDEGSADETTPESSGEMPYSNGYG. A glycan (N-linked (GlcNAc...) asparagine) is linked at Asn-268. The cysteines at positions 554 and 567 are disulfide-linked.

As to expression, expressed in the germline.

In terms of biological role, required for polar body extrusion during cytokinesis in embryo development. Affects cortical granule size. Has roles in meiotic chromosome segregation, osmotic barrier function and polarization in conjunction with cpg-2. Binds chitin. The sequence is that of Chondroitin proteoglycan 1 (cpg-1) from Caenorhabditis elegans.